Consider the following 644-residue polypeptide: Exoribonuclease 2 (644 aa).

The RNB domain maps to 189 to 516; that stretch reads RQDLTALNFV…NHRLLKAVIK (328 aa). The region spanning 561–643 is the S1 motif domain; it reads NTRFAAEIID…ETRSIIARPA (83 aa).

The protein belongs to the RNR ribonuclease family. RNase II subfamily.

It localises to the cytoplasm. It carries out the reaction Exonucleolytic cleavage in the 3'- to 5'-direction to yield nucleoside 5'-phosphates.. Functionally, involved in mRNA degradation. Hydrolyzes single-stranded polyribonucleotides processively in the 3' to 5' direction. The polypeptide is Exoribonuclease 2 (Salmonella paratyphi A (strain ATCC 9150 / SARB42)).